The chain runs to 235 residues: Calcium-activated potassium channel subunit beta-2 (235 aa).

The ball and chain stretch occupies residues 1–45; it reads MFIWTSGRTSSSYRQDEKRNIYQKIRDHDLLDKRKTVTALKAGED. Residues 1 to 46 are Cytoplasmic-facing; the sequence is MFIWTSGRTSSSYRQDEKRNIYQKIRDHDLLDKRKTVTALKAGEDR. Residues 47–67 traverse the membrane as a helical segment; that stretch reads AILLGLAMMVCSIMMYFLLGI. The Extracellular portion of the chain corresponds to 68 to 194; it reads TLLRSYMQSV…VILTKLYSSN (127 aa). N88, N96, and N119 each carry an N-linked (GlcNAc...) asparagine glycan. Residues 195–215 traverse the membrane as a helical segment; it reads VLFHSLFWPTCMMAGGVAIVA. Over 216–235 the chain is Cytoplasmic; the sequence is MVKLTQYLSLLCERIQRINR.

This sequence belongs to the KCNMB (TC 8.A.14.1) family. KCNMB2 subfamily. Interacts with KCNMA1 tetramer. There are probably 4 molecules of KCMNB2 per KCNMA1 tetramer. In terms of processing, N-glycosylated.

Its subcellular location is the membrane. In terms of biological role, regulatory subunit of the calcium activated potassium KCNMA1 (maxiK) channel. Modulates the calcium sensitivity and gating kinetics of KCNMA1, thereby contributing to KCNMA1 channel diversity. Acts as a negative regulator that confers rapid and complete inactivation of KCNMA1 channel complex. This chain is Calcium-activated potassium channel subunit beta-2 (Kcnmb2), found in Mus musculus (Mouse).